The primary structure comprises 196 residues: METNGSFSGARLVDGKWIIPESRRKDGSVRRERAVKPGYTAPEDIKRYRPGRGNFASLEKQMKKLQLSNDASTSKSIDRPPISELEKEKLERPLSNKKKEKNDHKAESLKHDYDSVGEKRISKDSVKHLDKTYSSIDSKKDFKYNFPKTQAPEWRRGAKPLSKTSEPSVYSEKMSKRENKKSINTVDKKTGYKEKE.

The span at 21–35 (ESRRKDGSVRRERAV) shows a compositional bias: basic and acidic residues. 2 disordered regions span residues 21–53 (ESRR…PGRG) and 65–196 (LQLS…KEKE). A compositionally biased stretch (polar residues) spans 66–75 (QLSNDASTSK). Basic and acidic residues-rich tracts occupy residues 84-94 (ELEKEKLERPL), 100-143 (EKND…KDFK), and 173-196 (KMSK…KEKE).

This is an uncharacterized protein from Schizosaccharomyces pombe (strain 972 / ATCC 24843) (Fission yeast).